We begin with the raw amino-acid sequence, 450 residues long: Phosphomethylpyrimidine synthase (450 aa).

Residues asparagine 80, methionine 109, tyrosine 138, histidine 173, 193 to 195 (SRG), 234 to 237 (DSLR), and glutamate 273 each bind substrate. Histidine 277 serves as a coordination point for Zn(2+). Tyrosine 300 provides a ligand contact to substrate. Residue histidine 341 coordinates Zn(2+). Cysteine 421, cysteine 424, and cysteine 429 together coordinate [4Fe-4S] cluster.

The protein belongs to the ThiC family. In terms of assembly, homodimer. [4Fe-4S] cluster is required as a cofactor.

It catalyses the reaction 5-amino-1-(5-phospho-beta-D-ribosyl)imidazole + S-adenosyl-L-methionine = 4-amino-2-methyl-5-(phosphooxymethyl)pyrimidine + CO + 5'-deoxyadenosine + formate + L-methionine + 3 H(+). The protein operates within cofactor biosynthesis; thiamine diphosphate biosynthesis. In terms of biological role, catalyzes the synthesis of the hydroxymethylpyrimidine phosphate (HMP-P) moiety of thiamine from aminoimidazole ribotide (AIR) in a radical S-adenosyl-L-methionine (SAM)-dependent reaction. This Campylobacter fetus subsp. fetus (strain 82-40) protein is Phosphomethylpyrimidine synthase.